Here is a 339-residue protein sequence, read N- to C-terminus: HPr kinase/phosphorylase (339 aa).

Active-site residues include histidine 153 and lysine 174. Position 168 to 175 (168 to 175 (GKSGLGKS)) interacts with ATP. Serine 175 is a binding site for Mg(2+). The Proton acceptor; for phosphorylation activity. Proton donor; for dephosphorylation activity role is filled by aspartate 192. Residues 216 to 225 (MEIRGLGVVD) are important for the catalytic mechanism of both phosphorylation and dephosphorylation. Glutamate 217 provides a ligand contact to Mg(2+). Arginine 258 is an active-site residue. The segment at 279–284 (PINPGK) is important for the catalytic mechanism of dephosphorylation.

The protein belongs to the HPrK/P family. Homohexamer. The cofactor is Mg(2+).

It catalyses the reaction [HPr protein]-L-serine + ATP = [HPr protein]-O-phospho-L-serine + ADP + H(+). It carries out the reaction [HPr protein]-O-phospho-L-serine + phosphate + H(+) = [HPr protein]-L-serine + diphosphate. Its function is as follows. Catalyzes the ATP- as well as the pyrophosphate-dependent phosphorylation of a specific serine residue in HPr, a phosphocarrier protein of the phosphoenolpyruvate-dependent sugar phosphotransferase system (PTS). HprK/P also catalyzes the pyrophosphate-producing, inorganic phosphate-dependent dephosphorylation (phosphorolysis) of seryl-phosphorylated HPr (P-Ser-HPr). The sequence is that of HPr kinase/phosphorylase from Chlorobium phaeobacteroides (strain BS1).